The primary structure comprises 778 residues: Tubulin polyglutamylase ttll6 (778 aa).

The interval 1-43 (MGTPAERSVSEVCRCEPDPGLEGEGWGSDTHAEPSNTPIPLPV) is disordered. The region spanning 51–393 (KKKLWINLTN…LGACDRRKIT (343 aa)) is the TTL domain. ATP-binding positions include Lys168, 174-175 (QG), 196-199 (QVYM), and 209-211 (KFD). Gln174 contacts a protein. L-glutamate is bound at residue Arg235. ATP is bound at residue 257–258 (TN). The L-glutamate site is built by Tyr259 and Lys277. Mg(2+) is bound by residues Asp340, Glu353, and Asn355. Position 356 (His356) interacts with a protein. Residues 365–445 (RLDREVKDSL…MGGFRRIFPR (81 aa)) form a c-MTBD region region. Lys371 contacts L-glutamate. 4 stretches are compositionally biased toward basic and acidic residues: residues 402–418 (ERLQ…EEPR), 485–510 (KQEQ…GEKV), 533–542 (SVREETPVSL), and 760–778 (LSHD…EHSL). Disordered regions lie at residues 402–422 (ERLQ…QSQA), 485–542 (KQEQ…PVSL), and 758–778 (PHLS…EHSL).

It belongs to the tubulin--tyrosine ligase family. Mg(2+) serves as cofactor.

The protein resides in the cytoplasm. Its subcellular location is the cytoskeleton. The protein localises to the cilium axoneme. It is found in the cilium basal body. It catalyses the reaction L-glutamyl-[protein] + L-glutamate + ATP = gamma-L-glutamyl-L-glutamyl-[protein] + ADP + phosphate + H(+). The catalysed reaction is (L-glutamyl)(n)-gamma-L-glutamyl-L-glutamyl-[protein] + L-glutamate + ATP = (L-glutamyl)(n+1)-gamma-L-glutamyl-L-glutamyl-[protein] + ADP + phosphate + H(+). In terms of biological role, polyglutamylase which modifies both tubulin and non-tubulin proteins, generating alpha-linked polyglutamate side chains on the gamma-carboxyl group of specific glutamate residues of target proteins. Preferentially mediates ATP-dependent long polyglutamate chain elongation over the initiation step of the polyglutamylation reaction. Preferentially modifies the alpha-tubulin tail over a beta-tail. Mediates microtubule polyglutamylation in cilia axoneme, which is important for ciliary structural formation and motility. Polyglutamylates olfactory cilia, necessary for the regulation of ciliary structure and beating. The sequence is that of Tubulin polyglutamylase ttll6 from Danio rerio (Zebrafish).